A 548-amino-acid chain; its full sequence is Alpha-1,3-mannosyl-glycoprotein 4-beta-N-acetylglucosaminyltransferase B (548 aa).

The Cytoplasmic portion of the chain corresponds to 1 to 7; sequence MRLRNGT. A helical; Signal-anchor for type II membrane protein membrane pass occupies residues 8–28; the sequence is FLTLLLFCLCAFLSLSWYAAL. Residues 29 to 548 are Lumenal-facing; the sequence is SGQKGDVVDV…LSEIFLKKAD (520 aa). A coiled-coil region spans residues 36–83; sequence VDVYQREFLALRDRLHAAEQESLKRSKELNLVLDEIKRAVSERQALRD. 2 N-linked (GlcNAc...) asparagine glycosylation sites follow: asparagine 87 and asparagine 103.

This sequence belongs to the glycosyltransferase 54 family. As to quaternary structure, interacts with SLC35A3. Requires a divalent metal cation as cofactor. In terms of processing, N-glycosylated. Widely expressed. Strongly overexpressed in pancreatic cancer.

The protein localises to the golgi apparatus membrane. It catalyses the reaction an N(4)-{beta-D-GlcNAc-(1-&gt;2)-alpha-D-Man-(1-&gt;3)-[alpha-D-Man-(1-&gt;6)]-beta-D-Man-(1-&gt;4)-beta-D-GlcNAc-(1-&gt;4)-beta-D-GlcNAc}-L-asparaginyl-[protein] + UDP-N-acetyl-alpha-D-glucosamine = an N(4)-{beta-D-GlcNAc-(1-&gt;2)-[beta-D-GlcNAc-(1-&gt;4)]-alpha-D-Man-(1-&gt;3)-[alpha-D-Man-(1-&gt;6)]-beta-D-Man-(1-&gt;4)-beta-D-GlcNAc-(1-&gt;4)-beta-D-GlcNAc}-L-asparaginyl-[protein] + UDP + H(+). The enzyme catalyses N(4)-{beta-D-GlcNAc-(1-&gt;2)-alpha-D-Man-(1-&gt;3)-[beta-D-GlcNAc-(1-&gt;2)-alpha-D-Man-(1-&gt;6)]-beta-D-Man-(1-&gt;4)-beta-D-GlcNAc-(1-&gt;4)-beta-D-GlcNAc}-L-asparaginyl-[protein] + UDP-N-acetyl-alpha-D-glucosamine = N(4)-{beta-D-GlcNAc-(1-&gt;2)-[beta-D-GlcNAc-(1-&gt;4)]-alpha-D-Man-(1-&gt;3)-[beta-D-GlcNAc-(1-&gt;2)-alpha-D-Man-(1-&gt;6)]-beta-D-Man-(1-&gt;4)-beta-D-GlcNAc-(1-&gt;4)-beta-D-GlcNAc}-L-asparaginyl-[protein] + UDP + H(+). It carries out the reaction an N(4)-{beta-D-GlcNAc-(1-&gt;2)-alpha-D-Man-(1-&gt;3)-[beta-D-GlcNAc-(1-&gt;2)-[beta-D-GlcNAc-(1-&gt;6)]-alpha-D-Man-(1-&gt;6)]-beta-D-Man-(1-&gt;4)-beta-D-GlcNAc-(1-&gt;4)-beta-D-GlcNAc}-L-asparaginyl-[protein] + UDP-N-acetyl-alpha-D-glucosamine = an N(4)-{beta-D-GlcNAc-(1-&gt;2)-[beta-D-GlcNAc-(1-&gt;4)]-alpha-D-Man-(1-&gt;3)-[beta-D-GlcNAc-(1-&gt;2)-[beta-D-GlcNAc-(1-&gt;6)]-alpha-D-Man-(1-&gt;6)]-beta-D-Man-(1-&gt;4)-beta-D-GlcNAc-(1-&gt;4)-beta-D-GlcNAc}-L-asparaginyl-[protein] + UDP + H(+). The catalysed reaction is an N(4)-{beta-D-GlcNAc-(1-&gt;2)-alpha-D-Man-(1-&gt;3)-[beta-D-GlcNAc-(1-&gt;2)-alpha-D-Man-(1-&gt;6)]-beta-D-Man-(1-&gt;4)-beta-D-GlcNAc-(1-&gt;4)-[alpha-L-Fuc-(1-&gt;6)]-beta-D-GlcNAc}-L-asparaginyl-[protein] + UDP-N-acetyl-alpha-D-glucosamine = N(4)-{beta-D-GlcNAc-(1-&gt;2)-[beta-D-GlcNAc-(1-&gt;4)]-alpha-D-Man-(1-&gt;3)-[beta-D-GlcNAc-(1-&gt;2)-alpha-D-Man-(1-&gt;6)]-beta-D-Man-(1-&gt;4)-beta-D-GlcNAc-(1-&gt;4)-[alpha-L-Fuc-(1-&gt;6)]-beta-D-GlcNAc}-asparaginyl-[protein] + UDP + H(+). It catalyses the reaction an N(4)-{beta-D-GlcNAc-(1-&gt;2)-alpha-D-Man-(1-&gt;3)-[beta-D-Gal-(1-&gt;4)-beta-D-GlcNAc-(1-&gt;2)-alpha-D-Man-(1-&gt;6)]-beta-D-Man-(1-&gt;4)-beta-D-GlcNAc-(1-&gt;4)-beta-D-GlcNAc}-L-asparaginyl-[protein] + UDP-N-acetyl-alpha-D-glucosamine = an N(4)-{beta-D-GlcNAc-(1-&gt;2)-[beta-D-GlcNAc-(1-&gt;4)]-alpha-D-Man-(1-&gt;3)-[beta-D-Gal-(1-&gt;4)-beta-D-GlcNAc-(1-&gt;2)-alpha-D-Man-(1-&gt;6)]-beta-D-Man-(1-&gt;4)-beta-D-GlcNAc-(1-&gt;4)-beta-D-GlcNAc}-L-asparaginyl-[protein] + UDP + H(+). The enzyme catalyses N(4)-{beta-D-GlcNAc-(1-&gt;2)-alpha-D-Man-(1-&gt;3)-[alpha-D-Man-(1-&gt;3)-{alpha-D-Man-(1-&gt;6)}-alpha-D-Man-(1-&gt;6)]-beta-D-Man-(1-&gt;4)-beta-D-GlcNAc-(1-&gt;4)-beta-D-GlcNAc}-asparaginyl-[protein] + UDP-N-acetyl-alpha-D-glucosamine = N(4)-{beta-D-GlcNAc-(1-&gt;2)-[beta-D-GlcNAc-(1-&gt;4)]-alpha-D-Man-(1-&gt;3)-[alpha-D-Man-(1-&gt;3)-{alpha-D-Man-(1-&gt;6)}-alpha-D-Man-(1-&gt;6)]-beta-D-Man-(1-&gt;4)-beta-D-GlcNAc-(1-&gt;4)-beta-D-GlcNAc}-asparaginyl-[protein] + UDP + H(+). It carries out the reaction N(4)-{beta-D-GlcNAc-(1-&gt;2)-alpha-D-Man-(1-&gt;3)-beta-D-Man-(1-&gt;4)-beta-D-GlcNAc-(1-&gt;4)-beta-D-GlcNAc}-asparaginyl-[protein] + UDP-N-acetyl-alpha-D-glucosamine = N(4)-{beta-D-GlcNAc-(1-&gt;2)-[beta-D-GlcNAc-(1-&gt;4)]-alpha-D-Man-(1-&gt;3)-beta-D-Man-(1-&gt;4)-beta-D-GlcNAc-(1-&gt;4)-beta-D-GlcNAc}-asparaginyl-[protein] + UDP + H(+). It functions in the pathway protein modification; protein glycosylation. Its function is as follows. Glycosyltransferase that catalyzes the transfer of GlcNAc from UDP-GlcNAc to the GlcNAcbeta1-2Manalpha1-3 arm of the core structure of N-linked glycans through a beta1-4 linkage and participates in the production of tri- and tetra-antennary N-linked sugar chains. Prefers complex-type N-glycans over hybrid-types. Has lower affinities for donors or acceptors than MGAT4A, suggesting that, under physiological conditions, it is not the main contributor in N-glycan biosynthesis. In Homo sapiens (Human), this protein is Alpha-1,3-mannosyl-glycoprotein 4-beta-N-acetylglucosaminyltransferase B.